Reading from the N-terminus, the 458-residue chain is Argininosuccinate lyase (458 aa).

Belongs to the lyase 1 family. Argininosuccinate lyase subfamily.

The protein resides in the cytoplasm. The catalysed reaction is 2-(N(omega)-L-arginino)succinate = fumarate + L-arginine. It functions in the pathway amino-acid biosynthesis; L-arginine biosynthesis; L-arginine from L-ornithine and carbamoyl phosphate: step 3/3. The sequence is that of Argininosuccinate lyase from Salmonella agona (strain SL483).